An 871-amino-acid chain; its full sequence is MNISEWIEQSRSVFKAQLDTKIKIIGIIGKDYPDHGKGDNINCYLRENVFPVATSDNETCTIFAHFSEDEQLLFLVLNGVDDVANLRKCMESESKNYFEAMAESESQQMRLLHFLFISCHFIVIFEQTSRIDLEFIRFLKKVNTLRSLNRRKVSQRLRDVDFDFDSDGRLTVPYVLMAFQRNNIRTDTNITKKRELYEKLEKNLDHQLTDILKLYDLTGSGNSALCQLSESLQVVHLLNPDSVKRDIITEMFDIFMAEAENGNVARVAANHKLTSNNAFVRFLEDRFRAEKNEISLNIAIDMLEALQFVLDGSLEEKPESLRSQTQTFIKRIQSDHMEEARRLYTNETRPVSGERRGGGFRITEQETMDPSVKIRSKQEHLIRFNEATCYIETVVGINQQEILSQVQTQCNDMWQSDLRACESISMMGHPCVKKVHPTYGDQTVPEARWTAHDASNTLVSTCVCGNKQLVRQEPFTLKEANFDFYEHPDFNCCKGLWRYQFQLYQEDTEEKDDIMWADRESNSLRAAKKMAQREDELAVELDDMELPESLQQSYTSSEDSSEDDDDFAIQTASSEDSLSGSDSYARPGSRRDEFESSKTARDMAVYFAKRIQKLEKLEKMDDFLMGVPNTLTIGKLPMFPSFFLTSLGESNLYKHGAGLKNQPNFKLGGEYLTPAVVFLDVDLDVWCRDLVKFRTDDYTRRGTKDLKDDMPRVKLFVGFEYECSRGHRFFVDHNGEPLIYPRNVNVLKESSARASLGNILNADLPLRRPCTCRKPPLKSAQLQKIHVVTPKAPVKITIDPKILVPGHEGTYGTGQEPLELHHSKYYILHLPVVYSGPSGTWMPGEYNSERMGTLKGGSIKVVYKPVMPFRW.

The segment at 541–596 (LDDMELPESLQQSYTSSEDSSEDDDDFAIQTASSEDSLSGSDSYARPGSRRDEFES) is disordered. The segment covering 573–583 (SSEDSLSGSDS) has biased composition (low complexity).

This sequence belongs to the SMG8 family.

Functionally, involved in nonsense-mediated decay (NMD) of mRNAs containing premature stop codons. Probable component of kinase complex containing smg-1 and recruited to stalled ribosomes. This Caenorhabditis briggsae protein is Nonsense-mediated mRNA decay factor SMG8 (smg-8).